A 409-amino-acid polypeptide reads, in one-letter code: Failed axon connections homolog (409 aa).

A helical membrane pass occupies residues Y68–I88. Positions D372–K409 are disordered.

It belongs to the FAX family.

Its subcellular location is the membrane. Functionally, may play a role in axonal development. This chain is Failed axon connections homolog (Faxc), found in Rattus norvegicus (Rat).